The primary structure comprises 390 residues: Curcumin synthase 3 (390 aa).

Cysteine 164 is a catalytic residue.

Belongs to the thiolase-like superfamily. Chalcone/stilbene synthases family. In terms of assembly, homodimer.

It carries out the reaction (E)-feruloylacetyl-CoA + (E)-feruloyl-CoA + H2O = curcumin + CO2 + 2 CoA. It catalyses the reaction (E)-feruloylacetyl-CoA + (E)-4-coumaroyl-CoA + H2O = demethoxycurcumin + CO2 + 2 CoA. The enzyme catalyses (4-coumaroyl)acetyl-CoA + 4-coumaroyl-CoA + H2O = bisdemethoxycurcumin + CO2 + 2 CoA. Its pathway is secondary metabolite biosynthesis; flavonoid biosynthesis. Its function is as follows. Catalyzes the synthesis of curcumin by condensing feruloyl-CoA with a diketide-CoA in the curcuminoid biosynthesis. Also acts as a demethoxycurcumin synthase by accepting 4-coumaroyl-CoA as a starter substrate instead of feruloyl-CoA. This chain is Curcumin synthase 3 (CURS3), found in Curcuma longa (Turmeric).